A 160-amino-acid chain; its full sequence is Probable chemoreceptor glutamine deamidase CheD 2 (160 aa).

This sequence belongs to the CheD family.

It carries out the reaction L-glutaminyl-[protein] + H2O = L-glutamyl-[protein] + NH4(+). Functionally, probably deamidates glutamine residues to glutamate on methyl-accepting chemotaxis receptors (MCPs), playing an important role in chemotaxis. This chain is Probable chemoreceptor glutamine deamidase CheD 2, found in Geobacter sulfurreducens (strain ATCC 51573 / DSM 12127 / PCA).